The chain runs to 129 residues: uncharacterized protein (129 aa).

A helical transmembrane segment spans residues Ile-77–Leu-97. Positions Ser-109 to Ala-129 are disordered. The segment covering Asn-111 to Ala-129 has biased composition (basic and acidic residues).

It is found in the vacuole membrane. This is an uncharacterized protein from Saccharomyces cerevisiae (strain ATCC 204508 / S288c) (Baker's yeast).